An 89-amino-acid chain; its full sequence is Small ribosomal subunit protein uS14A (89 aa).

It belongs to the universal ribosomal protein uS14 family. In terms of assembly, part of the 30S ribosomal subunit. Contacts proteins S3 and S10.

In terms of biological role, binds 16S rRNA, required for the assembly of 30S particles and may also be responsible for determining the conformation of the 16S rRNA at the A site. This chain is Small ribosomal subunit protein uS14A, found in Streptococcus agalactiae serotype Ia (strain ATCC 27591 / A909 / CDC SS700).